The following is a 236-amino-acid chain: Phosphoribosylaminoimidazole-succinocarboxamide synthase (236 aa).

This sequence belongs to the SAICAR synthetase family.

It carries out the reaction 5-amino-1-(5-phospho-D-ribosyl)imidazole-4-carboxylate + L-aspartate + ATP = (2S)-2-[5-amino-1-(5-phospho-beta-D-ribosyl)imidazole-4-carboxamido]succinate + ADP + phosphate + 2 H(+). It functions in the pathway purine metabolism; IMP biosynthesis via de novo pathway; 5-amino-1-(5-phospho-D-ribosyl)imidazole-4-carboxamide from 5-amino-1-(5-phospho-D-ribosyl)imidazole-4-carboxylate: step 1/2. This chain is Phosphoribosylaminoimidazole-succinocarboxamide synthase, found in Campylobacter jejuni (strain RM1221).